A 130-amino-acid chain; its full sequence is Protein ApaG (130 aa).

The region spanning 3–127 is the ApaG domain; that stretch reads RALTRDIEVT…FSLDTPDLRR (125 aa).

The protein is Protein ApaG of Allorhizobium ampelinum (strain ATCC BAA-846 / DSM 112012 / S4) (Agrobacterium vitis (strain S4)).